The sequence spans 393 residues: NAD(P)H-quinone oxidoreductase subunit H, chloroplastic (393 aa).

Belongs to the complex I 49 kDa subunit family. In terms of assembly, NDH is composed of at least 16 different subunits, 5 of which are encoded in the nucleus.

The protein resides in the plastid. The protein localises to the chloroplast thylakoid membrane. The enzyme catalyses a plastoquinone + NADH + (n+1) H(+)(in) = a plastoquinol + NAD(+) + n H(+)(out). It catalyses the reaction a plastoquinone + NADPH + (n+1) H(+)(in) = a plastoquinol + NADP(+) + n H(+)(out). In terms of biological role, NDH shuttles electrons from NAD(P)H:plastoquinone, via FMN and iron-sulfur (Fe-S) centers, to quinones in the photosynthetic chain and possibly in a chloroplast respiratory chain. The immediate electron acceptor for the enzyme in this species is believed to be plastoquinone. Couples the redox reaction to proton translocation, and thus conserves the redox energy in a proton gradient. This Huperzia lucidula (Shining clubmoss) protein is NAD(P)H-quinone oxidoreductase subunit H, chloroplastic.